Here is a 241-residue protein sequence, read N- to C-terminus: Carboxy-S-adenosyl-L-methionine synthase (241 aa).

S-adenosyl-L-methionine contacts are provided by residues Tyr38, 63 to 65 (GCS), 88 to 89 (DN), 116 to 117 (DI), Asn131, and Arg198.

It belongs to the class I-like SAM-binding methyltransferase superfamily. Cx-SAM synthase family. As to quaternary structure, homodimer.

It catalyses the reaction prephenate + S-adenosyl-L-methionine = carboxy-S-adenosyl-L-methionine + 3-phenylpyruvate + H2O. Its function is as follows. Catalyzes the conversion of S-adenosyl-L-methionine (SAM) to carboxy-S-adenosyl-L-methionine (Cx-SAM). This Actinobacillus succinogenes (strain ATCC 55618 / DSM 22257 / CCUG 43843 / 130Z) protein is Carboxy-S-adenosyl-L-methionine synthase.